The chain runs to 132 residues: Small ribosomal subunit protein uS8 (132 aa).

It belongs to the universal ribosomal protein uS8 family. Part of the 30S ribosomal subunit. Contacts proteins S5 and S12.

One of the primary rRNA binding proteins, it binds directly to 16S rRNA central domain where it helps coordinate assembly of the platform of the 30S subunit. The sequence is that of Small ribosomal subunit protein uS8 from Xanthomonas campestris pv. campestris (strain 8004).